The following is a 218-amino-acid chain: Histone chaperone ASF1B (218 aa).

It belongs to the ASF1 family. As to quaternary structure, interacts with histone H3 and histone H4. Interacts strongly with the N-terminus of TOUSLED. In terms of processing, phosphorylated in vitro by TOUSLED.

The protein resides in the nucleus. Its function is as follows. Histone chaperone that facilitates histone deposition and histone exchange and removal during nucleosome assembly and disassembly. This chain is Histone chaperone ASF1B (ASF1B), found in Arabidopsis thaliana (Mouse-ear cress).